Consider the following 236-residue polypeptide: Small ribosomal subunit protein uS2c (236 aa).

This sequence belongs to the universal ribosomal protein uS2 family.

It is found in the plastid. The protein resides in the chloroplast. In Illicium oligandrum (Star anise), this protein is Small ribosomal subunit protein uS2c (rps2).